Consider the following 300-residue polypeptide: Acetaldehyde dehydrogenase 3 (300 aa).

NAD(+) is bound at residue 11 to 14; the sequence is SGNI. Residue Cys126 is the Acyl-thioester intermediate of the active site. Residues 157-165 and Asn276 contribute to the NAD(+) site; that span reads SAGPGTRAN.

The protein belongs to the acetaldehyde dehydrogenase family.

The enzyme catalyses acetaldehyde + NAD(+) + CoA = acetyl-CoA + NADH + H(+). In Rhodococcus opacus (strain B4), this protein is Acetaldehyde dehydrogenase 3.